An 85-amino-acid chain; its full sequence is Large ribosomal subunit protein bL27 (85 aa).

Residues 1–20 (MATKKAGGSTRNGRDSEAKR) form a disordered region.

It belongs to the bacterial ribosomal protein bL27 family.

This chain is Large ribosomal subunit protein bL27, found in Haemophilus influenzae (strain ATCC 51907 / DSM 11121 / KW20 / Rd).